The primary structure comprises 220 residues: Mediator of RNA polymerase II transcription subunit 19 (220 aa).

Residues 171–220 (AFDLDGTGKSQSGSNSGNNSKKRKNKSSGSSMATPTHSDSHEDMKRRRLE) are disordered. Low complexity predominate over residues 178–189 (GKSQSGSNSGNN). Positions 208 to 220 (SDSHEDMKRRRLE) are enriched in basic and acidic residues.

It belongs to the Mediator complex subunit 19 family. Component of the Mediator complex, which is composed of at least 21 subunits that form three structurally distinct submodules. The Mediator head module contains MED6, MED8, MED11, SRB4/MED17, SRB5/MED18, ROX3/MED19, SRB2/MED20 and SRB6/MED22, the middle module contains MED1, MED4, NUT1/MED5, MED7, CSE2/MED9, NUT2/MED10, SRB7/MED21 and SOH1/MED31, and the tail module contains MED2, PGD1/MED3, RGR1/MED14, GAL11/MED15 and SIN4/MED16. The head and the middle modules interact directly with RNA polymerase II, whereas the elongated tail module interacts with gene-specific regulatory proteins.

The protein resides in the nucleus. Functionally, component of the Mediator complex, a coactivator involved in the regulated transcription of nearly all RNA polymerase II-dependent genes. Mediator functions as a bridge to convey information from gene-specific regulatory proteins to the basal RNA polymerase II transcription machinery. The Mediator complex, having a compact conformation in its free form, is recruited to promoters by direct interactions with regulatory proteins and serves for the assembly of a functional preinitiation complex with RNA polymerase II and the general transcription factors. The Mediator complex unfolds to an extended conformation and partially surrounds RNA polymerase II, specifically interacting with the unphosphorylated form of the C-terminal domain (CTD) of RNA polymerase II. The Mediator complex dissociates from the RNA polymerase II holoenzyme and stays at the promoter when transcriptional elongation begins. The chain is Mediator of RNA polymerase II transcription subunit 19 (ROX3) from Saccharomyces cerevisiae (strain ATCC 204508 / S288c) (Baker's yeast).